A 315-amino-acid polypeptide reads, in one-letter code: Tyrosine recombinase XerC (315 aa).

A Core-binding (CB) domain is found at 13 to 104 (ADLAAAREEW…GVRSLLRHLE (92 aa)). Positions 125-309 (SLPKPLTADD…DTQRLLEVYD (185 aa)) constitute a Tyr recombinase domain. Active-site residues include R168, K193, H261, R264, and H287. Y296 (O-(3'-phospho-DNA)-tyrosine intermediate) is an active-site residue.

It belongs to the 'phage' integrase family. XerC subfamily. In terms of assembly, forms a cyclic heterotetrameric complex composed of two molecules of XerC and two molecules of XerD.

The protein resides in the cytoplasm. Functionally, site-specific tyrosine recombinase, which acts by catalyzing the cutting and rejoining of the recombining DNA molecules. The XerC-XerD complex is essential to convert dimers of the bacterial chromosome into monomers to permit their segregation at cell division. It also contributes to the segregational stability of plasmids. This is Tyrosine recombinase XerC from Brucella suis biovar 1 (strain 1330).